Reading from the N-terminus, the 281-residue chain is Acetylglutamate kinase (281 aa).

Substrate is bound by residues 64–65, R86, and N179; that span reads GG.

Belongs to the acetylglutamate kinase family. ArgB subfamily.

It localises to the cytoplasm. It catalyses the reaction N-acetyl-L-glutamate + ATP = N-acetyl-L-glutamyl 5-phosphate + ADP. The protein operates within amino-acid biosynthesis; L-arginine biosynthesis; N(2)-acetyl-L-ornithine from L-glutamate: step 2/4. Functionally, catalyzes the ATP-dependent phosphorylation of N-acetyl-L-glutamate. This Campylobacter curvus (strain 525.92) protein is Acetylglutamate kinase.